The primary structure comprises 618 residues: MSAPTKPHSPTFKPEPHSAANEPKHPAARPKHVALQQLTGAQAVIRSLEELGVDVIFGIPGGAVLPVYDPLFDSKKLRHVLVRHEQGAGHAASGYAHVTGRVGVCMATSGPGATNLVTPLADAQMDSIPVVAITGQVGRGLIGTDAFQEADISGITMPITKHNFLVRSGDDIPRVLAEAFHIAASGRPGAVLVDIPKDVLQGQCTFSWPPRMELPGYKPNTKPHSRQVREAAKLIAAARKPVLYVGGGVIRGEATEQLRELAELTGIPVVTTLMARGAFPDSHRQNLGMPGMHGTVAAVAALQRSDLLIALGTRFDDRVTGKLDSFAPEAKVIHADIDPAEIGKNRHADVPIVGDVKAVITELIAMLRHHHIPGTIEMADWWAYLNGVRKTYPLSYGPQSDGSLSPEYVIEKLGEIAGPDAVFVAGVGQHQMWAAQFIRYEKPRSWLNSGGLGTMGFAIPAAMGAKIALPGTEVWAIDGDGCFQMTNQELATCAVEGIPVKVALINNGNLGMVRQWQSLFYAERYSQTDLATHSHRIPDFVKLAEALGCVGLRCEREEDVVDVINQARAINDCPVVIDFIVGADAQVWPMVAAGTSNDEIQAARGIRPLFDDITEGHA.

Residues 1–30 (MSAPTKPHSPTFKPEPHSAANEPKHPAARP) are disordered. Thiamine diphosphate is bound at residue glutamate 85. FAD is bound by residues arginine 187, 293–314 (HGTV…LGTR), and 336–355 (DIDP…IVGD). The tract at residues 429–509 (QHQMWAAQFI…VKVALINNGN (81 aa)) is thiamine pyrophosphate binding. Mg(2+) is bound by residues aspartate 480 and asparagine 507.

The protein belongs to the TPP enzyme family. Requires Mg(2+) as cofactor. The cofactor is thiamine diphosphate.

It catalyses the reaction 2 pyruvate + H(+) = (2S)-2-acetolactate + CO2. It participates in amino-acid biosynthesis; L-isoleucine biosynthesis; L-isoleucine from 2-oxobutanoate: step 1/4. It functions in the pathway amino-acid biosynthesis; L-valine biosynthesis; L-valine from pyruvate: step 1/4. The protein is Acetolactate synthase (ilvB) of Mycobacterium bovis (strain ATCC BAA-935 / AF2122/97).